Reading from the N-terminus, the 363-residue chain is tRNA dimethylallyltransferase (363 aa).

65-72 (GPTASGKS) contacts ATP. 67-72 (TASGKS) provides a ligand contact to substrate. 2 interaction with substrate tRNA regions span residues 90–93 (DSMQ) and 214–218 (QRLIR).

The protein belongs to the IPP transferase family. As to quaternary structure, monomer. Mg(2+) serves as cofactor.

The enzyme catalyses adenosine(37) in tRNA + dimethylallyl diphosphate = N(6)-dimethylallyladenosine(37) in tRNA + diphosphate. Catalyzes the transfer of a dimethylallyl group onto the adenine at position 37 in tRNAs that read codons beginning with uridine, leading to the formation of N6-(dimethylallyl)adenosine (i(6)A). This chain is tRNA dimethylallyltransferase, found in Rickettsia rickettsii (strain Sheila Smith).